We begin with the raw amino-acid sequence, 165 residues long: Ubiquitin-fold modifier-conjugating enzyme 1 (165 aa).

C116 (glycyl thioester intermediate) is an active-site residue.

The protein belongs to the ubiquitin-conjugating enzyme family. UFC1 subfamily.

E2-like enzyme which forms an intermediate with UFM1 via a thioester linkage. This is Ubiquitin-fold modifier-conjugating enzyme 1 from Drosophila virilis (Fruit fly).